The following is an 85-amino-acid chain: UPF0386 protein Bind_1628 (85 aa).

This sequence belongs to the UPF0386 family.

The protein is UPF0386 protein Bind_1628 of Beijerinckia indica subsp. indica (strain ATCC 9039 / DSM 1715 / NCIMB 8712).